Reading from the N-terminus, the 544-residue chain is Chaperonin GroEL (544 aa).

ATP contacts are provided by residues 29-32, K50, 86-90, G414, 477-479, and D493; these read TMGP, DGTTT, and NAV.

Belongs to the chaperonin (HSP60) family. In terms of assembly, forms a cylinder of 14 subunits composed of two heptameric rings stacked back-to-back. Interacts with the co-chaperonin GroES.

It localises to the cytoplasm. It catalyses the reaction ATP + H2O + a folded polypeptide = ADP + phosphate + an unfolded polypeptide.. Together with its co-chaperonin GroES, plays an essential role in assisting protein folding. The GroEL-GroES system forms a nano-cage that allows encapsulation of the non-native substrate proteins and provides a physical environment optimized to promote and accelerate protein folding. This chain is Chaperonin GroEL, found in Campylobacter curvus (strain 525.92).